Reading from the N-terminus, the 178-residue chain is Ribosomal RNA small subunit methyltransferase G (178 aa).

Residues glycine 54, leucine 59, 105–106 (LE), and arginine 120 each bind S-adenosyl-L-methionine.

It belongs to the methyltransferase superfamily. RNA methyltransferase RsmG family.

Its subcellular location is the cytoplasm. The catalysed reaction is guanosine(527) in 16S rRNA + S-adenosyl-L-methionine = N(7)-methylguanosine(527) in 16S rRNA + S-adenosyl-L-homocysteine. Specifically methylates the N7 position of guanine in position 527 of 16S rRNA. The polypeptide is Ribosomal RNA small subunit methyltransferase G (Helicobacter acinonychis (strain Sheeba)).